The primary structure comprises 368 residues: 1-aminocyclopropane-1-carboxylate synthase (368 aa).

Lysine 230 is modified (N6-(pyridoxal phosphate)lysine).

This sequence belongs to the class-I pyridoxal-phosphate-dependent aminotransferase family. As to quaternary structure, homodimer. It depends on pyridoxal 5'-phosphate as a cofactor.

It catalyses the reaction S-adenosyl-L-methionine = 1-aminocyclopropane-1-carboxylate + S-methyl-5'-thioadenosine + H(+). Its pathway is alkene biosynthesis; ethylene biosynthesis via S-adenosyl-L-methionine; ethylene from S-adenosyl-L-methionine: step 1/2. In terms of biological role, catalyzes the formation of 1-aminocyclopropane-1-carboxylate, a direct precursor of ethylene in higher plants. The sequence is that of 1-aminocyclopropane-1-carboxylate synthase (ACS5) from Vigna radiata var. radiata (Mung bean).